Reading from the N-terminus, the 617-residue chain is RNA polymerase sigma factor RpoD (617 aa).

The tract at residues 192–222 is disordered; it reads NITNDSNENEDENEDENEDEDENSIDPELAN. Acidic residues predominate over residues 198–216; it reads NENEDENEDENEDEDENSI. The tract at residues 383 to 453 is sigma-70 factor domain-2; that stretch reads MVEANLRLVI…TRSIADQART (71 aa). The Interaction with polymerase core subunit RpoC signature appears at 407 to 410; the sequence is DLIQ. Positions 462–538 are sigma-70 factor domain-3; the sequence is ETINKLNRIS…DTTLELPLDS (77 aa). A sigma-70 factor domain-4 region spans residues 551-604; it reads VLSGLTAREAKVLRMRFGIDMNTDHTLEEVGKQFDVTRERIRQIEAKALRKLRH. The segment at residues 577 to 596 is a DNA-binding region (H-T-H motif); that stretch reads LEEVGKQFDVTRERIRQIEA.

It belongs to the sigma-70 factor family. RpoD/SigA subfamily. Interacts transiently with the RNA polymerase catalytic core.

The protein localises to the cytoplasm. Sigma factors are initiation factors that promote the attachment of RNA polymerase to specific initiation sites and are then released. This sigma factor is the primary sigma factor during exponential growth. This chain is RNA polymerase sigma factor RpoD, found in Buchnera aphidicola subsp. Schizaphis graminum (strain Sg).